Here is a 528-residue protein sequence, read N- to C-terminus: Pentatricopeptide repeat-containing protein At1g62914, mitochondrial (528 aa).

The transit peptide at 1–20 (MLAKISSSAKRFVHRSLVVR) directs the protein to the mitochondrion. PPR repeat units follow at residues 77–111 (SIIEFSKLLSAIAKMNKFDLVISFGEKMEILGISH), 112–146 (NLYTYNILINCFCRCSRLSLALALLGKMMKLGYEP), 147–181 (DIVTLNSLLNGFCHGNRISDAVALVDQMVEMGYKP), 182–216 (DTVTFTTLIHGLFLHNKASEAVALIDRMVQRGCQP), 217–251 (DLVTYGAVVNGLCKRGDTDLALNLLNKMEAAKIEA), 252–286 (NVVIYSTVIDSLCKYRHEDDALNLFTEMENKGVRP), 287–321 (NVITYSSLISCLCNYGRWSDASRLLSDMIERKINP), 322–356 (NLVTFSALIDAFVKKGKLVKAEKLYEEMIKRSIDP), 357–391 (NIFTYSSLINGFCMLDRLGEAKQMLELMIRKDCLP), 392–426 (NVVTYNTLINGFCKAKRVDKGMELFREMSQRGLVG), 427–461 (NTVTYTTLIHGFFQARDCDNAQMVFKQMVSVGVHP), 462–496 (NILTYNILLDGLCKNGKLAKAMVVFEYLQRSTMEP), and 497–528 (DIYTYNIMIEGMCKAGKWKMGGIYFVASALKE).

It belongs to the PPR family. P subfamily.

Its subcellular location is the mitochondrion. This chain is Pentatricopeptide repeat-containing protein At1g62914, mitochondrial, found in Arabidopsis thaliana (Mouse-ear cress).